We begin with the raw amino-acid sequence, 35 residues long: Thionin NsW1 (35 aa).

Cystine bridges form between Cys-4–Cys-32, Cys-12–Cys-30, and Cys-16–Cys-26.

Post-translationally, contains 4 disulfide bonds.

It localises to the secreted. Antimicrobial peptide disrupting membranes. Has antibacterial against Gram-positive bacteria S.aureus (MIC=6.5 uM) and B.subtilis (MIC=3.25 uM) but not against Gram-negative bacterium E.coli. Has antifungal activity against C.albicans (MIC=1.63 uM). This Nigella sativa (Black cumin) protein is Thionin NsW1.